The chain runs to 389 residues: Chalcone synthase 6 (389 aa).

Cys-164 is an active-site residue.

Belongs to the thiolase-like superfamily. Chalcone/stilbene synthases family.

The enzyme catalyses (E)-4-coumaroyl-CoA + 3 malonyl-CoA + 3 H(+) = 2',4,4',6'-tetrahydroxychalcone + 3 CO2 + 4 CoA. The protein operates within secondary metabolite biosynthesis; flavonoid biosynthesis. Its function is as follows. The primary product of this enzyme is 4,2',4',6'-tetrahydroxychalcone (also termed naringenin-chalcone or chalcone) which can under specific conditions spontaneously isomerize into naringenin. In Pisum sativum (Garden pea), this protein is Chalcone synthase 6 (CHS6).